A 486-amino-acid polypeptide reads, in one-letter code: Replication factor C large subunit (486 aa).

Residue 46-53 participates in ATP binding; it reads GPPGSGKT. A disordered region spans residues 419 to 486; the sequence is VKKETPKKTE…KKQATLDSFF (68 aa). Basic and acidic residues-rich tracts occupy residues 420-432 and 442-480; these read KKET…KPKE and RISE…KKQA.

This sequence belongs to the activator 1 small subunits family. RfcL subfamily. As to quaternary structure, heteromultimer composed of small subunits (RfcS) and large subunits (RfcL).

Part of the RFC clamp loader complex which loads the PCNA sliding clamp onto DNA. The chain is Replication factor C large subunit from Methanococcus maripaludis (strain DSM 14266 / JCM 13030 / NBRC 101832 / S2 / LL).